A 616-amino-acid chain; its full sequence is Chaperone protein HscA homolog (616 aa).

The protein belongs to the heat shock protein 70 family.

Chaperone involved in the maturation of iron-sulfur cluster-containing proteins. Has a low intrinsic ATPase activity which is markedly stimulated by HscB. In Vibrio atlanticus (strain LGP32) (Vibrio splendidus (strain Mel32)), this protein is Chaperone protein HscA homolog.